The following is a 321-amino-acid chain: tRNA 2-thiolation protein NcsA (321 aa).

Lys-204 is covalently cross-linked (Glycyl lysine isopeptide (Lys-Gly) (interchain with G-Cter in SAMP2)).

The protein belongs to the TtcA family. CTU1/NCS6/ATPBD3 subfamily. In terms of assembly, interacts with monomeric and polymeric forms of SAMP2. Interacts with UbaA. Interacts with archaeal EF-1-alpha and Pan1. Non-sampylated protein forms a complex with archaeal CPSF1 of approximately 100 kDa. In terms of processing, sampylated at Lys-204 with the archaeal ubiquitin-like protein SAMP2. Polymeric chains of SAMP2 are also linked.

It functions in the pathway tRNA modification; 5-methoxycarbonylmethyl-2-thiouridine-tRNA biosynthesis. In terms of biological role, required for thiolation of mcm(5)S(2)U at the wobble uridine position of tRNA specific for lysine (tRNA(Lys)). Probably acts by catalyzing adenylation of tRNA, an intermediate required for 2-thiolation. May also act as a sulfurtransferase that transfers sulfur from thiocarboxylated SAMP2 onto the uridine of tRNA at wobble position. Required for cell growth at elevated temperatures. The protein is tRNA 2-thiolation protein NcsA of Haloferax volcanii (strain ATCC 29605 / DSM 3757 / JCM 8879 / NBRC 14742 / NCIMB 2012 / VKM B-1768 / DS2) (Halobacterium volcanii).